The chain runs to 177 residues: Coatomer subunit zeta-1 (177 aa).

This sequence belongs to the adaptor complexes small subunit family. In terms of assembly, oligomeric complex that consists of at least the alpha, beta, beta', gamma, delta, epsilon and zeta subunits.

The protein localises to the cytoplasm. The protein resides in the golgi apparatus membrane. It is found in the cytoplasmic vesicle. It localises to the COPI-coated vesicle membrane. In terms of biological role, the coatomer is a cytosolic protein complex that binds to dilysine motifs and reversibly associates with Golgi non-clathrin-coated vesicles, which further mediate biosynthetic protein transport from the ER, via the Golgi up to the trans Golgi network. Coatomer complex is required for budding from Golgi membranes, and is essential for the retrograde Golgi-to-ER transport of dilysine-tagged proteins. The zeta subunit may be involved in regulating the coat assembly and, hence, the rate of biosynthetic protein transport due to its association-dissociation properties with the coatomer complex. This is Coatomer subunit zeta-1 from Arabidopsis thaliana (Mouse-ear cress).